A 64-amino-acid polypeptide reads, in one-letter code: Large ribosomal subunit protein uL29 (64 aa).

Belongs to the universal ribosomal protein uL29 family.

This is Large ribosomal subunit protein uL29 from Dichelobacter nodosus (strain VCS1703A).